The sequence spans 421 residues: Dihydroorotase (421 aa).

Zn(2+) is bound by residues histidine 60 and histidine 62. Substrate is bound by residues histidine 62–arginine 64 and asparagine 94. The Zn(2+) site is built by aspartate 151, histidine 178, and histidine 231. Asparagine 277 contacts substrate. Aspartate 304 contributes to the Zn(2+) binding site. Aspartate 304 is an active-site residue. Residue histidine 308 participates in substrate binding.

This sequence belongs to the metallo-dependent hydrolases superfamily. DHOase family. Class I DHOase subfamily. It depends on Zn(2+) as a cofactor.

It carries out the reaction (S)-dihydroorotate + H2O = N-carbamoyl-L-aspartate + H(+). The protein operates within pyrimidine metabolism; UMP biosynthesis via de novo pathway; (S)-dihydroorotate from bicarbonate: step 3/3. Catalyzes the reversible cyclization of carbamoyl aspartate to dihydroorotate. The polypeptide is Dihydroorotase (Clostridioides difficile (strain 630) (Peptoclostridium difficile)).